A 122-amino-acid polypeptide reads, in one-letter code: Fluoride-specific ion channel FluC 2 (122 aa).

Helical transmembrane passes span 4–24 (VAVW…RFVV), 38–58 (LGTL…GGLA), 63–83 (AALL…TWML), and 96–116 (AALA…FIGQ). Na(+)-binding residues include G73 and T76.

This sequence belongs to the fluoride channel Fluc/FEX (TC 1.A.43) family.

Its subcellular location is the cell membrane. The enzyme catalyses fluoride(in) = fluoride(out). Na(+) is not transported, but it plays an essential structural role and its presence is essential for fluoride channel function. Its function is as follows. Fluoride-specific ion channel. Important for reducing fluoride concentration in the cell, thus reducing its toxicity. In Mycolicibacterium paratuberculosis (strain ATCC BAA-968 / K-10) (Mycobacterium paratuberculosis), this protein is Fluoride-specific ion channel FluC 2.